The sequence spans 398 residues: Argininosuccinate synthase (398 aa).

10-18 (AYSGGLDTS) contributes to the ATP binding site. Tyr-87 contributes to the L-citrulline binding site. ATP is bound at residue Gly-117. L-aspartate is bound by residues Thr-119, Asn-123, and Asp-124. An L-citrulline-binding site is contributed by Asn-123. Residues Arg-127, Ser-175, Glu-260, and Tyr-272 each coordinate L-citrulline.

It belongs to the argininosuccinate synthase family. Type 1 subfamily. As to quaternary structure, homotetramer.

It is found in the cytoplasm. The enzyme catalyses L-citrulline + L-aspartate + ATP = 2-(N(omega)-L-arginino)succinate + AMP + diphosphate + H(+). It functions in the pathway amino-acid biosynthesis; L-arginine biosynthesis; L-arginine from L-ornithine and carbamoyl phosphate: step 2/3. In Lactococcus lactis subsp. lactis (strain IL1403) (Streptococcus lactis), this protein is Argininosuccinate synthase.